Consider the following 1164-residue polypeptide: DNA-directed RNA polymerase 132 kDa polypeptide (1164 aa).

This sequence belongs to the RNA polymerase beta chain family. As to quaternary structure, the DNA-dependent RNA polymerase used for intermediate and late genes expression consists of eight subunits (147) kDa, (133) kDa, (35) kDa, (30) kDa, (22) kDa, (19) kDa, (18) kDa and (7) kDa totalling more than 500 kDa in mass. The same holoenzyme, with the addition of the transcription-specificity factor RAP94, is used for early gene expression.

It is found in the virion. The enzyme catalyses RNA(n) + a ribonucleoside 5'-triphosphate = RNA(n+1) + diphosphate. In terms of biological role, part of the DNA-dependent RNA polymerase which catalyzes the transcription of viral DNA into RNA using the four ribonucleoside triphosphates as substrates. Responsible for the transcription of early, intermediate and late genes. DNA-dependent RNA polymerase associates with the early transcription factor (ETF), itself composed of D6 and A7, thereby allowing the early genes transcription. Late transcription, and probably also intermediate transcription, require newly synthesized RNA polymerase. The polypeptide is DNA-directed RNA polymerase 132 kDa polypeptide (RPO132) (Monkeypox virus (strain Zaire-96-I-16) (MPX)).